Consider the following 63-residue polypeptide: Large ribosomal subunit protein bL32 (63 aa).

The interval 1–27 (MANPKAKMSKSRRDKRRAQFNARTKPV) is disordered. The span at 7 to 18 (KMSKSRRDKRRA) shows a compositional bias: basic residues.

It belongs to the bacterial ribosomal protein bL32 family.

In Chlorobium phaeobacteroides (strain DSM 266 / SMG 266 / 2430), this protein is Large ribosomal subunit protein bL32.